We begin with the raw amino-acid sequence, 188 residues long: Thymidine kinase (188 aa).

17–24 (GPMFAGKT) is a binding site for ATP. The active-site Proton acceptor is glutamate 92. Phenylalanine 121 contributes to the substrate binding site. Zn(2+) contacts are provided by cysteine 146 and cysteine 149. 166–170 (LILAG) is a binding site for substrate. Positions 179 and 182 each coordinate Zn(2+).

The protein belongs to the thymidine kinase family.

The catalysed reaction is thymidine + ATP = dTMP + ADP + H(+). In terms of biological role, phosphorylates thymidine. ASFV replicates in the cytoplasm of infected cells and contains genes encoding a number of enzymes needed for DNA synthesis, including thymidine kinase. Important for growth in swine macrophages in vitro and is a virus virulence factor in swine. This chain is Thymidine kinase, found in African swine fever virus (isolate Tick/South Africa/Pretoriuskop Pr4/1996) (ASFV).